The primary structure comprises 288 residues: Bifunctional protein FolD (288 aa).

NADP(+) contacts are provided by residues 166-168 (GAS) and I232.

Belongs to the tetrahydrofolate dehydrogenase/cyclohydrolase family. As to quaternary structure, homodimer.

It catalyses the reaction (6R)-5,10-methylene-5,6,7,8-tetrahydrofolate + NADP(+) = (6R)-5,10-methenyltetrahydrofolate + NADPH. It carries out the reaction (6R)-5,10-methenyltetrahydrofolate + H2O = (6R)-10-formyltetrahydrofolate + H(+). It functions in the pathway one-carbon metabolism; tetrahydrofolate interconversion. Its function is as follows. Catalyzes the oxidation of 5,10-methylenetetrahydrofolate to 5,10-methenyltetrahydrofolate and then the hydrolysis of 5,10-methenyltetrahydrofolate to 10-formyltetrahydrofolate. This is Bifunctional protein FolD from Salmonella arizonae (strain ATCC BAA-731 / CDC346-86 / RSK2980).